Reading from the N-terminus, the 226-residue chain is MPGQPTRDQVAALVDHTLLKPEATAADVVALVAEAADLGVYAVCVSPSMVPAAVSAGGVRVATVAGFPSGKHASAIKAHEAALAVACGAVEVDMVIDVGAALAGHLDAVRSDIEAVRCATSGAVLKVIVESAALLGLADESTLIGVCRVAEDAGADFVKTSTGFHPAGGASTRAVEVMASAVGGRLGVKASGGIRTATDAVAMLSAGATRLGLSGTRAVLEGLGQN.

Residue Asp-93 is the Proton donor/acceptor of the active site. The active-site Schiff-base intermediate with acetaldehyde is Lys-159. Residue Lys-189 is the Proton donor/acceptor of the active site.

It belongs to the DeoC/FbaB aldolase family. DeoC type 1 subfamily.

Its subcellular location is the cytoplasm. The enzyme catalyses 2-deoxy-D-ribose 5-phosphate = D-glyceraldehyde 3-phosphate + acetaldehyde. Its pathway is carbohydrate degradation; 2-deoxy-D-ribose 1-phosphate degradation; D-glyceraldehyde 3-phosphate and acetaldehyde from 2-deoxy-alpha-D-ribose 1-phosphate: step 2/2. Functionally, catalyzes a reversible aldol reaction between acetaldehyde and D-glyceraldehyde 3-phosphate to generate 2-deoxy-D-ribose 5-phosphate. The sequence is that of Deoxyribose-phosphate aldolase from Mycobacterium marinum (strain ATCC BAA-535 / M).